Consider the following 311-residue polypeptide: 3'(2'),5'-bisphosphate nucleotidase 1 (311 aa).

Residue D49 is the Proton acceptor of the active site. Positions 72, 116, 118, and 119 each coordinate Mg(2+). T121 acts as the Proton acceptor in catalysis. T202, H205, G227, and K231 together coordinate AMP. Residue D254 coordinates Mg(2+).

It belongs to the inositol monophosphatase superfamily. The cofactor is Mg(2+).

It carries out the reaction adenosine 3',5'-bisphosphate + H2O = AMP + phosphate. The catalysed reaction is adenosine 2',5'-bisphosphate + H2O = AMP + phosphate. The enzyme catalyses 3'-phosphoadenylyl sulfate + H2O = adenosine 5'-phosphosulfate + phosphate. It catalyses the reaction 1D-myo-inositol 1,4-bisphosphate + H2O = 1D-myo-inositol 4-phosphate + phosphate. It carries out the reaction 1D-myo-inositol 1,3,4-trisphosphate + H2O = 1D-myo-inositol 3,4-bisphosphate + phosphate. Its activity is regulated as follows. Inhibited by Li(+) and Ca(2+), but not by Na(+). In terms of biological role, phosphatase that converts 3'(2')-phosphoadenosine 5'-phosphate (PAP) to AMP and adenosine 3'-phosphate 5'-phosphosulfate (PAPS) to adenosine 5'-phosphosulfate (APS). Is also able to hydrolyze inositol 1,4-bisphosphate (Ins(1,4)P2) and inositol 1,3,4-trisphosphate (Ins(1,3,4)P3), but is not active on AMP, 3'-AMP, fructose-1,6-bisphosphate, Ins(1)P, Ins(2)P and Ins(1,4,5)P3. Probably prevents the toxic accumulation of PAP, a compound which inhibits a variety of proteins, including PAPS-utilizing enzymes such as sulfotransferases, and RNA processing enzymes. Could also play a role in inositol recycling and phosphoinositide metabolism. This is 3'(2'),5'-bisphosphate nucleotidase 1 (bpnt1) from Dictyostelium discoideum (Social amoeba).